The following is a 379-amino-acid chain: Protein trichome birefringence-like 36 (379 aa).

The helical; Signal-anchor for type II membrane protein transmembrane segment at 8–24 (VLFLSLCLILGKVVLSQ) threads the bilayer. The GDS motif motif lies at 123-125 (GDS). Positions 353-367 (DCSHWCLPGVPDIWN) match the DCXHWCLPGXXDXWN motif motif.

It belongs to the PC-esterase family. TBL subfamily.

Its subcellular location is the membrane. In terms of biological role, may act as a bridging protein that binds pectin and other cell wall polysaccharides. Probably involved in maintaining esterification of pectins. May be involved in the specific O-acetylation of cell wall polymers. This chain is Protein trichome birefringence-like 36 (TBL36), found in Arabidopsis thaliana (Mouse-ear cress).